The sequence spans 454 residues: tRNA modification GTPase MnmE (454 aa).

Residues R23, E80, and K120 each coordinate (6S)-5-formyl-5,6,7,8-tetrahydrofolate. One can recognise a TrmE-type G domain in the interval 216-377; sequence GMKVVIAGRP…LRNHLKQSMG (162 aa). N226 is a K(+) binding site. GTP-binding positions include 226–231, 245–251, 270–273, 335–338, and 358–360; these read NAGKSS, TDIAGTT, DTAG, NKAD, and SAR. S230 contacts Mg(2+). Residues T245, I247, and T250 each coordinate K(+). A Mg(2+)-binding site is contributed by T251. K454 lines the (6S)-5-formyl-5,6,7,8-tetrahydrofolate pocket.

The protein belongs to the TRAFAC class TrmE-Era-EngA-EngB-Septin-like GTPase superfamily. TrmE GTPase family. As to quaternary structure, homodimer. Heterotetramer of two MnmE and two MnmG subunits. K(+) is required as a cofactor.

It is found in the cytoplasm. Functionally, exhibits a very high intrinsic GTPase hydrolysis rate. Involved in the addition of a carboxymethylaminomethyl (cmnm) group at the wobble position (U34) of certain tRNAs, forming tRNA-cmnm(5)s(2)U34. The protein is tRNA modification GTPase MnmE of Shigella dysenteriae serotype 1 (strain Sd197).